A 141-amino-acid chain; its full sequence is Large ribosomal subunit protein uL11 (141 aa).

It belongs to the universal ribosomal protein uL11 family. In terms of assembly, part of the ribosomal stalk of the 50S ribosomal subunit. Interacts with L10 and the large rRNA to form the base of the stalk. L10 forms an elongated spine to which L12 dimers bind in a sequential fashion forming a multimeric L10(L12)X complex. Post-translationally, one or more lysine residues are methylated.

Its function is as follows. Forms part of the ribosomal stalk which helps the ribosome interact with GTP-bound translation factors. This is Large ribosomal subunit protein uL11 from Crocosphaera subtropica (strain ATCC 51142 / BH68) (Cyanothece sp. (strain ATCC 51142)).